Here is a 489-residue protein sequence, read N- to C-terminus: N-succinylglutamate 5-semialdehyde dehydrogenase (489 aa).

223-228 is a binding site for NAD(+); it reads GSASTG. Residues Glu-246 and Cys-280 contribute to the active site.

The protein belongs to the aldehyde dehydrogenase family. AstD subfamily.

The catalysed reaction is N-succinyl-L-glutamate 5-semialdehyde + NAD(+) + H2O = N-succinyl-L-glutamate + NADH + 2 H(+). It functions in the pathway amino-acid degradation; L-arginine degradation via AST pathway; L-glutamate and succinate from L-arginine: step 4/5. In terms of biological role, catalyzes the NAD-dependent reduction of succinylglutamate semialdehyde into succinylglutamate. The polypeptide is N-succinylglutamate 5-semialdehyde dehydrogenase (Acinetobacter baylyi (strain ATCC 33305 / BD413 / ADP1)).